The sequence spans 348 residues: L-threonine 3-dehydrogenase (348 aa).

Cysteine 42 lines the Zn(2+) pocket. Active-site charge relay system residues include threonine 44 and histidine 47. Positions 67, 68, 97, 100, 103, and 111 each coordinate Zn(2+). NAD(+) is bound by residues leucine 179, glutamate 199, arginine 204, 266–268 (LGL), and 291–292 (IT).

It belongs to the zinc-containing alcohol dehydrogenase family. In terms of assembly, homotetramer. It depends on Zn(2+) as a cofactor.

It is found in the cytoplasm. The enzyme catalyses L-threonine + NAD(+) = (2S)-2-amino-3-oxobutanoate + NADH + H(+). The protein operates within amino-acid degradation; L-threonine degradation via oxydo-reductase pathway; glycine from L-threonine: step 1/2. In terms of biological role, catalyzes the NAD(+)-dependent oxidation of L-threonine to 2-amino-3-ketobutyrate. To a lesser extent, also catalyzes the oxidation of L-serine, D-threonine, butan-2,3-diol, butan-1,2-diol, and propan-1,2-diol and cannot oxidize other L-amino acids. Cannot utilize NADP(H) instead of NAD(H). The protein is L-threonine 3-dehydrogenase of Pyrococcus furiosus (strain ATCC 43587 / DSM 3638 / JCM 8422 / Vc1).